A 2126-amino-acid chain; its full sequence is Phthioceranic/hydroxyphthioceranic acid synthase (2126 aa).

The region spanning 24–447 (VTPVAVIGMA…GTNVHAVVEQ (424 aa)) is the Ketosynthase family 3 (KS3) domain. The active-site Acyl-thioester intermediate; for beta-ketoacyl synthase activity is the Cys196. Residues His331 and His367 each act as for beta-ketoacyl synthase activity in the active site. A linker domain (LD) region spans residues 449 to 549 (PQTEAQPHAA…VYQPAVGQDD (101 aa)). Residues 550 to 849 (RGPVWLFSGQ…VAALAGMRRE (300 aa)) are acyltransferase (AT). Ser641 serves as the catalytic Acyl-ester intermediate; for acyltransferase activity. Residues 909-1191 (STVAVHPLLG…LAVCGLRIGT (283 aa)) are dehydratase (DH). An N-terminal hotdog fold region spans residues 914-1032 (HPLLGAHVRL…RRASAVLQQV (119 aa)). Residues 914–1198 (HPLLGAHVRL…IGTGVSERDK (285 aa)) form the PKS/mFAS DH domain. Residue His947 is the Proton acceptor; for dehydratase activity of the active site. The interval 1051–1198 (PCRVDGEDLR…IGTGVSERDK (148 aa)) is C-terminal hotdog fold. The active-site Proton donor; for dehydratase activity is the Asp1115. Residues 1227-1398 (KWLLISDCAA…SEEDETAWRD (172 aa)) are pseudo beta-ketoacyl reductase (PsiKR). The tract at residues 1426–1750 (SGMRLQIRTP…EHTGKLVLHI (325 aa)) is enoylreductase (ER). The segment at 1772–2019 (GSYIITGGLG…AERSRFFEVF (248 aa)) is beta-ketoacyl reductase (KR). NADP(+) contacts are provided by residues 1780–1783 (LGGL), 1803–1806 (SRTQ), 1831–1832 (DI), and 1904–1905 (FS). Positions 2040–2126 (DEWPARLRQL…DAPAAALSSQ (87 aa)) constitute a Carrier domain. The residue at position 2075 (Ser2075) is an O-(pantetheine 4'-phosphoryl)serine.

Requires pantetheine 4'-phosphate as cofactor.

It carries out the reaction hexadecanoyl-[(hydroxy)phthioceranic acid synthase] + 7 (S)-methylmalonyl-CoA + 14 NADPH + 21 H(+) = C37-phthioceranyl-[(hydroxy)phthioceranic acid synthase] + 7 CO2 + 14 NADP(+) + 7 CoA + 7 H2O. The catalysed reaction is hexadecanoyl-[(hydroxy)phthioceranic acid synthase] + 8 (S)-methylmalonyl-CoA + 16 NADPH + 24 H(+) = C40-phthioceranyl-[(hydroxy)phthioceranic acid synthase] + 8 CO2 + 16 NADP(+) + 8 CoA + 8 H2O. The protein operates within lipid metabolism; fatty acid biosynthesis. It functions in the pathway glycolipid metabolism; sulfolipid-1 biosynthesis. Its function is as follows. Involved in sulfolipid-1 biosynthesis. Catalyzes the synthesis of the hepta- and octamethyl phthioceranic and hydroxyphthioceranic acids, the methyl-branched acyl constituents of sulfolipids. The chain is Phthioceranic/hydroxyphthioceranic acid synthase (pks2) from Mycobacterium bovis (strain ATCC BAA-935 / AF2122/97).